We begin with the raw amino-acid sequence, 184 residues long: Interferon alpha-2 (184 aa).

A signal peptide spans 1–23 (MALPFSLLMALVVLSCHSSCSLG). Cystine bridges form between C24–C122 and C52–C162.

It belongs to the alpha/beta interferon family. Interacts with IFNAR2.

Its subcellular location is the secreted. Its function is as follows. Produced by macrophages, IFN-alpha have antiviral activities. The chain is Interferon alpha-2 from Equus caballus (Horse).